Reading from the N-terminus, the 161-residue chain is ATP synthase subunit b 1 (161 aa).

Residues 6–26 (EFYVALGFVIFVAILLYYGVH) form a helical membrane-spanning segment.

It belongs to the ATPase B chain family. F-type ATPases have 2 components, F(1) - the catalytic core - and F(0) - the membrane proton channel. F(1) has five subunits: alpha(3), beta(3), gamma(1), delta(1), epsilon(1). F(0) has three main subunits: a(1), b(2) and c(10-14). The alpha and beta chains form an alternating ring which encloses part of the gamma chain. F(1) is attached to F(0) by a central stalk formed by the gamma and epsilon chains, while a peripheral stalk is formed by the delta and b chains.

The protein localises to the cell inner membrane. Its function is as follows. F(1)F(0) ATP synthase produces ATP from ADP in the presence of a proton or sodium gradient. F-type ATPases consist of two structural domains, F(1) containing the extramembraneous catalytic core and F(0) containing the membrane proton channel, linked together by a central stalk and a peripheral stalk. During catalysis, ATP synthesis in the catalytic domain of F(1) is coupled via a rotary mechanism of the central stalk subunits to proton translocation. Functionally, component of the F(0) channel, it forms part of the peripheral stalk, linking F(1) to F(0). The protein is ATP synthase subunit b 1 of Beijerinckia indica subsp. indica (strain ATCC 9039 / DSM 1715 / NCIMB 8712).